The primary structure comprises 264 residues: Thymidylate synthase (264 aa).

Residue arginine 21 participates in dUMP binding. Histidine 51 contributes to the (6R)-5,10-methylene-5,6,7,8-tetrahydrofolate binding site. 126-127 serves as a coordination point for dUMP; sequence RR. The active-site Nucleophile is the cysteine 146. DUMP is bound by residues 166 to 169, asparagine 177, and 207 to 209; these read RSCD and HLY. Aspartate 169 provides a ligand contact to (6R)-5,10-methylene-5,6,7,8-tetrahydrofolate. (6R)-5,10-methylene-5,6,7,8-tetrahydrofolate is bound at residue alanine 263.

The protein belongs to the thymidylate synthase family. Bacterial-type ThyA subfamily. As to quaternary structure, homodimer.

The protein localises to the cytoplasm. The enzyme catalyses dUMP + (6R)-5,10-methylene-5,6,7,8-tetrahydrofolate = 7,8-dihydrofolate + dTMP. The protein operates within pyrimidine metabolism; dTTP biosynthesis. Functionally, catalyzes the reductive methylation of 2'-deoxyuridine-5'-monophosphate (dUMP) to 2'-deoxythymidine-5'-monophosphate (dTMP) while utilizing 5,10-methylenetetrahydrofolate (mTHF) as the methyl donor and reductant in the reaction, yielding dihydrofolate (DHF) as a by-product. This enzymatic reaction provides an intracellular de novo source of dTMP, an essential precursor for DNA biosynthesis. This chain is Thymidylate synthase, found in Salmonella arizonae (strain ATCC BAA-731 / CDC346-86 / RSK2980).